Consider the following 336-residue polypeptide: Isopentenyl-diphosphate delta-isomerase (336 aa).

Arg-5–Lys-6 is a substrate binding site. FMN is bound by residues Ala-60–Thr-62, Ser-90, and Asn-117. A substrate-binding site is contributed by Gln-147. Glu-148 contributes to the Mg(2+) binding site. Residues Lys-179, Ser-204, Thr-209, Gly-253–Arg-255, and Ser-274–Arg-275 contribute to the FMN site.

The protein belongs to the IPP isomerase type 2 family. In terms of assembly, homooctamer. Dimer of tetramers. FMN is required as a cofactor. The cofactor is NADPH. Mg(2+) serves as cofactor.

Its subcellular location is the cytoplasm. The enzyme catalyses isopentenyl diphosphate = dimethylallyl diphosphate. Functionally, involved in the biosynthesis of isoprenoids. Catalyzes the 1,3-allylic rearrangement of the homoallylic substrate isopentenyl (IPP) to its allylic isomer, dimethylallyl diphosphate (DMAPP). This chain is Isopentenyl-diphosphate delta-isomerase, found in Streptococcus pneumoniae serotype 4 (strain ATCC BAA-334 / TIGR4).